A 118-amino-acid chain; its full sequence is Holo-[acyl-carrier-protein] synthase (118 aa).

2 residues coordinate Mg(2+): aspartate 8 and glutamate 58.

The protein belongs to the P-Pant transferase superfamily. AcpS family. Requires Mg(2+) as cofactor.

The protein localises to the cytoplasm. It catalyses the reaction apo-[ACP] + CoA = holo-[ACP] + adenosine 3',5'-bisphosphate + H(+). Functionally, transfers the 4'-phosphopantetheine moiety from coenzyme A to a Ser of acyl-carrier-protein. This Listeria monocytogenes serotype 4a (strain HCC23) protein is Holo-[acyl-carrier-protein] synthase.